Here is a 328-residue protein sequence, read N- to C-terminus: Probable membrane-associated kinase regulator 4 (328 aa).

Residues 213–253 are disordered; it reads GQIKTERPKKQSNGSVSGSHRRSFSVSMRRQAAKSSNNKSS. Over residues 223 to 240 the composition is skewed to polar residues; the sequence is QSNGSVSGSHRRSFSVSM.

It localises to the cell membrane. This is Probable membrane-associated kinase regulator 4 (MAKR4) from Arabidopsis thaliana (Mouse-ear cress).